Reading from the N-terminus, the 62-residue chain is Conotoxin Sr5.7 (62 aa).

The N-terminal stretch at 1–22 is a signal peptide; that stretch reads MRCLPVFVILLLLIASAPSVDA. A propeptide spanning residues 23–44 is cleaved from the precursor; sequence QLKTKDDVPLASFHDNAKGTQH.

Belongs to the conotoxin T superfamily. Post-translationally, contains 2 disulfide bonds that can be either 'C1-C3, C2-C4' or 'C1-C4, C2-C3', since these disulfide connectivities have been observed for conotoxins with cysteine framework V (for examples, see AC P0DQQ7 and AC P81755). In terms of tissue distribution, expressed by the venom duct.

The protein localises to the secreted. This Conus spurius (Alphabet cone) protein is Conotoxin Sr5.7.